The chain runs to 293 residues: HTH-type transcriptional regulator HdfR (293 aa).

Positions 1–58 constitute an HTH lysR-type domain; sequence MDTELLKTFLEVSRTRHFGRAAESLYLTQSAVSFRIRQLENQLGANLFTRHRNNIRLT. The segment at residues 18 to 37 is a DNA-binding region (H-T-H motif); that stretch reads FGRAAESLYLTQSAVSFRIR.

This sequence belongs to the LysR transcriptional regulatory family.

Functionally, negatively regulates the transcription of the flagellar master operon flhDC by binding to the upstream region of the operon. In Yersinia enterocolitica serotype O:8 / biotype 1B (strain NCTC 13174 / 8081), this protein is HTH-type transcriptional regulator HdfR.